The following is a 128-amino-acid chain: 3-aminoacrylate deaminase RutC (128 aa).

The protein belongs to the RutC family. Homotrimer.

The enzyme catalyses (Z)-3-aminoacrylate + H2O + H(+) = 3-oxopropanoate + NH4(+). Its function is as follows. Involved in pyrimidine catabolism. Catalyzes the deamination of 3-aminoacrylate to malonic semialdehyde, a reaction that can also occur spontaneously. RutC may facilitate the reaction and modulate the metabolic fitness, rather than catalyzing essential functions. The chain is 3-aminoacrylate deaminase RutC from Escherichia coli (strain SE11).